Reading from the N-terminus, the 485-residue chain is Zinc finger protein 639 (485 aa).

Residues 1-14 are compositionally biased toward basic residues; sequence MNEYPKKRKRKTLH. The interval 1-20 is disordered; the sequence is MNEYPKKRKRKTLHPSRYSD. Ser60 bears the Phosphoserine mark. Residue Lys76 forms a Glycyl lysine isopeptide (Lys-Gly) (interchain with G-Cter in SUMO2) linkage. At Ser88 the chain carries Phosphoserine. Glycyl lysine isopeptide (Lys-Gly) (interchain with G-Cter in SUMO2) cross-links involve residues Lys177, Lys181, and Lys226. 8 consecutive C2H2-type zinc fingers follow at residues 204-227, 233-255, 260-283, 289-311, 374-397, 403-425, 431-454, and 460-482; these read YKCELCEFNSKYFSDLKQHMILKH, NVCRVCKESFSTNMLLIEHAKLH, YICKYCDYKTVIFENLSQHIADTH, YWCEQCDVQFSSSSELYLHFQEH, FVCQVCGFRSRLHTNVNRHVAIEH, HVCDDCGKGFSSMLEYCKHLNSH, YLCQYCEYSTGQIEDLKIHLDFKH, and HKCSDCLMRFGNERELISHLPVH. The tract at residues 371 to 455 is interaction with CTNNA2; sequence KNFFVCQVCG…LKIHLDFKHS (85 aa).

The protein belongs to the krueppel C2H2-type zinc-finger protein family. As to quaternary structure, interacts with CTNNA2.

The protein localises to the nucleus. Functionally, binds DNA and may function as a transcriptional repressor. This chain is Zinc finger protein 639 (ZNF639), found in Bos taurus (Bovine).